The chain runs to 30 residues: Arsenate respiratory reductase iron-sulfur subunit ArrB (30 aa).

Cys-12, Cys-15, Cys-18, and Cys-22 together coordinate [4Fe-4S] cluster.

As to quaternary structure, heterodimer composed of one large subunit (ArrA) and one small subunit (ArrB). [4Fe-4S] cluster is required as a cofactor.

The protein localises to the periplasm. Functionally, component of the arsenate respiratory reductase (Arr) complex, which catalyzes the reduction of arsenate (As(V)) to arsenite (As(III)). ArrB is probably the electron transfer subunit. The sequence is that of Arsenate respiratory reductase iron-sulfur subunit ArrB from Chrysiogenes arsenatis.